The following is a 398-amino-acid chain: MMGKETPSLRPVELPIQPVGFQDRYKVIHKICEALEKVAYPRVKLAKFAVSLELKLAKESKTSQLYRFNVGILLRDIVKFKANVYKLKIANKPLVPQKVNGRSHTAPITTKQEVFTRLRELLIDKETLRKNGYILPDVKYEPQQPVSSHVTCVRCGTKFSKEDIMNSVVCKFHPSKKLYDKSTKLEIYPCCGESTSSVSFLRLGCSTQKHHVYKGETYSELCTIANFLTTDLIDGKENVLALDCEMGFTTMGYEMVRLTIVDFFTSKTLYDEIIRPIGEVIDLNTQFSGVREEDILYAKDYEDVMEDVLRADMINRNSILIGHGLENDLNVMRLFHTRILDTAIMYSVGRFKNSLKNLSFEILSRKIQLGEHDSSQDAIAAMDIIKAKNGISITQTDW.

Positions 239-385 constitute an Exonuclease domain; it reads VLALDCEMGF…QDAIAAMDII (147 aa).

It belongs to the REXO1/REXO3 family.

The protein resides in the cytoplasm. Its subcellular location is the nucleus. 3' to 5' exoribonuclease required for proper 3' end maturation of MRP RNA and of the U5L snRNA. The sequence is that of RNA exonuclease 3 (REX3) from Candida glabrata (strain ATCC 2001 / BCRC 20586 / JCM 3761 / NBRC 0622 / NRRL Y-65 / CBS 138) (Yeast).